Reading from the N-terminus, the 859-residue chain is DNA (cytosine-5)-methyltransferase 3B (859 aa).

The segment at 1 to 305 (MKGDSRHLNE…LATFNKLVSY (305 aa)) is interaction with DNMT1 and DNMT3A. Residues 25–226 (GNFSDQSSDT…RDGDSTEYQD (202 aa)) are disordered. Residues 85 to 94 (DRDDEVDDGN) show a composition bias toward acidic residues. Residue Ser96 is modified to Phosphoserine. Residue Lys102 forms a Glycyl lysine isopeptide (Lys-Gly) (interchain with G-Cter in SUMO2) linkage. Basic and acidic residues predominate over residues 103 to 114 (LTRETKDTRTRS). Thr112 carries the post-translational modification Phosphothreonine. Position 116 is a phosphoserine (Ser116). Positions 167–179 (SSSASTPWSSPAS) are enriched in low complexity. Residues 189–198 (KSVSTPSVDL) are compositionally biased toward polar residues. Basic and acidic residues predominate over residues 214 to 226 (AESRDGDSTEYQD). Ser216 is modified (phosphoserine). Positions 232–290 (IGDLVWGKIKGFSWWPAMVVSWKATSKRQAMPGMRWVQWFGDGKFSEISADKLVALGLF) constitute a PWWP domain. A disordered region spans residues 348-429 (KPTGIEGLKP…ESRERMASEV (82 aa)). 2 stretches are compositionally biased toward basic and acidic residues: residues 370–381 (RRSDSRNLEPRR) and 412–426 (GKDR…ERMA). Residue Arg415 is modified to Citrulline. One can recognise an ADD domain in the interval 428 to 560 (EVTNNKGNLE…LQDFFTTDPD (133 aa)). A GATA-type; atypical zinc finger spans residues 439 to 469 (RCLSCGKKNPVSFHPLFEGGLCQSCRDRFLE). An interaction with the PRC2/EED-EZH2 complex region spans residues 440 to 532 (CLSCGKKNPV…LQEPWSCYMC (93 aa)). A PHD-type; atypical zinc finger spans residues 480 to 536 (QSYCTVCCEGRELLLCSNTSCCRCFCVECLEVLVGAGTAEDAKLQEPWSCYMCLPQR). The region spanning 581–859 (IRVLSLFDGI…APLKDYFACE (279 aa)) is the SAM-dependent MTase C5-type domain. Residues 588 to 592 (DGIAT) and Glu611 contribute to the S-adenosyl-L-methionine site. Lys623 participates in a covalent cross-link: Glycyl lysine isopeptide (Lys-Gly) (interchain with G-Cter in SUMO2). Residue 633–635 (DVR) coordinates S-adenosyl-L-methionine. Cys657 is a catalytic residue. An S-adenosyl-L-methionine-binding site is contributed by 838–840 (RSW).

The protein belongs to the class I-like SAM-binding methyltransferase superfamily. C5-methyltransferase family. Interacts with CBX4, DNMT1, DNMT3A, SETDB1, UBE2I9, UBL1 and ZHX1. Interacts with SUV39H1 and BAZ2A/TIP5. Interacts with the PRC2/EED-EZH2 complex. Interacts with UHRF1. Sumoylated. In terms of processing, citrullinated by PADI4.

It is found in the nucleus. The catalysed reaction is a 2'-deoxycytidine in DNA + S-adenosyl-L-methionine = a 5-methyl-2'-deoxycytidine in DNA + S-adenosyl-L-homocysteine + H(+). With respect to regulation, activated by binding to the regulatory factor DNMT3L. Its function is as follows. Required for genome-wide de novo methylation and is essential for the establishment of DNA methylation patterns during development. DNA methylation is coordinated with methylation of histones. May preferentially methylates nucleosomal DNA within the nucleosome core region. May function as transcriptional co-repressor by associating with CBX4 and independently of DNA methylation. Seems to be involved in gene silencing. In association with DNMT1 and via the recruitment of CTCFL/BORIS, involved in activation of BAG1 gene expression by modulating dimethylation of promoter histone H3 at H3K4 and H3K9. Functions as a transcriptional corepressor by associating with ZHX1. Required for DUX4 silencing in somatic cells. The sequence is that of DNA (cytosine-5)-methyltransferase 3B (Dnmt3b) from Mus musculus (Mouse).